Reading from the N-terminus, the 460-residue chain is Benzyl alcohol O-benzoyltransferase (460 aa).

Residues H167 and D382 each act as proton acceptor in the active site.

This sequence belongs to the plant acyltransferase family.

It carries out the reaction benzyl alcohol + benzoyl-CoA = benzyl benzoate + CoA. Probably involved in the formation of volatile ester benzylbenzoate. This Nicotiana tabacum (Common tobacco) protein is Benzyl alcohol O-benzoyltransferase (HSR201).